A 277-amino-acid chain; its full sequence is Carbonyl reductase [NADPH] 1 (277 aa).

Position 2 is an N-acetylserine (Ser-2). Phosphoserine is present on residues Ser-2 and Ser-30. NADP(+) is bound by residues 10–34 (VTGA…GDVV), 63–64 (DI), and Asn-90. Glutathione-binding positions include 95 to 97 (FKV) and Gln-106. Ser-140 serves as a coordination point for substrate. A glutathione-binding site is contributed by 193-194 (AY). Tyr-194 functions as the Proton acceptor in the catalytic mechanism. NADP(+)-binding positions include 194–198 (YGVTK) and 231–233 (VRT). Lys-239 is subject to N6-1-carboxyethyl lysine. The interval 258 to 277 (PPDAEGPHGQFVQDKKVEPW) is disordered.

Belongs to the short-chain dehydrogenases/reductases (SDR) family. In terms of assembly, monomer.

It is found in the cytoplasm. The catalysed reaction is a secondary alcohol + NADP(+) = a ketone + NADPH + H(+). It catalyses the reaction prostaglandin F2alpha + NADP(+) = prostaglandin E2 + NADPH + H(+). The enzyme catalyses prostaglandin E1 + NADP(+) = 15-oxoprostaglandin E1 + NADPH + H(+). It carries out the reaction menadione + NADPH + H(+) = menadiol + NADP(+). The catalysed reaction is prostaglandin D2 + NADP(+) = 15-oxoprostaglandin D2 + NADPH + H(+). It catalyses the reaction prostaglandin E2 + NADP(+) = 15-oxoprostaglandin E2 + NADPH + H(+). The enzyme catalyses prostaglandin F2alpha + NADP(+) = 15-oxoprostaglandin F2alpha + NADPH + H(+). It carries out the reaction daunorubicin + NADPH + H(+) = 13-dihydrodaunorubicin + NADP(+). The catalysed reaction is S-nitrosoglutathione + NADPH + H(+) = S-(hydroxysulfenamide)glutathione + NADP(+). It catalyses the reaction corticosterone + NADPH + H(+) = 20beta-dihydrocorticosterone + NADP(+). The enzyme catalyses a primary alcohol + NADP(+) = an aldehyde + NADPH + H(+). It carries out the reaction cortisol + NADPH + H(+) = 20beta-dihydrocortisol + NADP(+). Its function is as follows. NADPH-dependent reductase with broad substrate specificity. Catalyzes the reduction of a wide variety of carbonyl compounds including quinones, prostaglandins, menadione, plus various xenobiotics. Catalyzes the reduction of the antitumor anthracyclines doxorubicin and daunorubicin to the cardiotoxic compounds doxorubicinol and daunorubicinol. Can convert prostaglandin E to prostaglandin F2-alpha. Can bind glutathione, which explains its higher affinity for glutathione-conjugated substrates. Catalyzes the reduction of S-nitrosoglutathione. In addition, participates in the glucocorticoid metabolism by catalyzing the NADPH-dependent cortisol/corticosterone into 20beta-dihydrocortisol (20b-DHF) or 20beta-corticosterone (20b-DHB), which are weak agonists of NR3C1 and NR3C2 in adipose tissue. This chain is Carbonyl reductase [NADPH] 1, found in Mus musculus (Mouse).